A 464-amino-acid polypeptide reads, in one-letter code: Anthocyanidin 3-O-galactosyltransferase 3GT1 (464 aa).

Serine 19 and histidine 21 together coordinate an anthocyanidin. Residue histidine 21 is the Proton acceptor of the active site. N-linked (GlcNAc...) asparagine glycosylation occurs at asparagine 38. The active-site Charge relay is the aspartate 121. Residue histidine 152 coordinates an anthocyanidin. The UDP-alpha-D-glucose site is built by alanine 342, glutamine 344, histidine 359, tryptophan 362, asparagine 363, serine 364, and glutamate 367. Glycine 382 contacts an anthocyanidin. A UDP-alpha-D-glucose-binding site is contributed by aspartate 383.

It belongs to the UDP-glycosyltransferase family. Monomer. As to expression, mostly expressed in leaves and flowers and, to a lower extent, in roots. In flowers, mainly observed in petals, toruses and scapes, and at lower levels in pistils and stamens.

The enzyme catalyses cyanidin + UDP-alpha-D-galactose = cyanidin 3-O-beta-D-galactoside + UDP + H(+). It carries out the reaction cyanidin + UDP-alpha-D-glucose = cyanidin 3-O-beta-D-glucoside + UDP + H(+). The catalysed reaction is delphinidin + UDP-alpha-D-glucose = delphinidin 3-O-beta-D-glucoside + UDP. It catalyses the reaction malvidin + UDP-alpha-D-glucose = malvidin 3-O-beta-D-glucoside + UDP. The enzyme catalyses delphinidin + UDP-alpha-D-galactose = delphinidin 3-O-beta-D-galactoside + UDP + H(+). It carries out the reaction pelargonidin + UDP-alpha-D-galactose = pelargonidin 3-O-beta-D-galactoside betaine + UDP. The catalysed reaction is peonidin + UDP-alpha-D-galactose = peonidin 3-O-beta-D-galactoside + UDP. It catalyses the reaction malvidin + UDP-alpha-D-galactose = malvidin 3-O-beta-D-galactoside + UDP + H(+). The enzyme catalyses petunidin + UDP-alpha-D-galactose = petunidin 3-O-beta-D-galactoside + UDP. It carries out the reaction an anthocyanidin + UDP-alpha-D-glucose + H(+) = an anthocyanidin 3-O-beta-D-glucoside + UDP. The catalysed reaction is an anthocyanidin + UDP-alpha-D-galactose = an anthocyanidin 3-O-beta-D-galactoside + UDP. It functions in the pathway pigment biosynthesis; anthocyanin biosynthesis. In terms of biological role, flavonoid 3-O-glycosyltransferase involved in the biosynthesis of anthocyanins conferring flower red/pink colors, mainly anthocyanidin 3-O-glycosides. Catalyzes the addition of UDP-sugar to the 3-OH of anthocyanidin, with a preference for UDP-galactose (UDP-Gal) as sugar donor and cyanidin as substrate; able to use delphinidin, pelargonidin, peonidin, malvidin and petunidin as substrates in the presence of UDP-Gal. Can also use UDP-glucose (UDP-Glu) as sugar donor with delphinidin, cyanidin and malvidin as substrates, but not active on pelargonidin, peonidin and petunidin. In Rhododendron delavayi (Rhododendron), this protein is Anthocyanidin 3-O-galactosyltransferase 3GT1.